Here is a 295-residue protein sequence, read N- to C-terminus: Acetyl-coenzyme A carboxylase carboxyl transferase subunit beta (295 aa).

A disordered region spans residues 1–20 (MSWLSKLMPSGIRTENTPAK). One can recognise a CoA carboxyltransferase N-terminal domain in the interval 28-295 (LWEKCSNCGS…QPHPQDADAA (268 aa)). Residues Cys-32, Cys-35, Cys-51, and Cys-54 each coordinate Zn(2+). Residues 32–54 (CSNCGSALYGPELEENLEVCPKC) form a C4-type zinc finger.

It belongs to the AccD/PCCB family. As to quaternary structure, acetyl-CoA carboxylase is a heterohexamer composed of biotin carboxyl carrier protein (AccB), biotin carboxylase (AccC) and two subunits each of ACCase subunit alpha (AccA) and ACCase subunit beta (AccD). Zn(2+) is required as a cofactor.

Its subcellular location is the cytoplasm. The catalysed reaction is N(6)-carboxybiotinyl-L-lysyl-[protein] + acetyl-CoA = N(6)-biotinyl-L-lysyl-[protein] + malonyl-CoA. It functions in the pathway lipid metabolism; malonyl-CoA biosynthesis; malonyl-CoA from acetyl-CoA: step 1/1. In terms of biological role, component of the acetyl coenzyme A carboxylase (ACC) complex. Biotin carboxylase (BC) catalyzes the carboxylation of biotin on its carrier protein (BCCP) and then the CO(2) group is transferred by the transcarboxylase to acetyl-CoA to form malonyl-CoA. The sequence is that of Acetyl-coenzyme A carboxylase carboxyl transferase subunit beta from Xanthomonas campestris pv. campestris (strain B100).